We begin with the raw amino-acid sequence, 573 residues long: Proline--tRNA ligase (573 aa).

Belongs to the class-II aminoacyl-tRNA synthetase family. ProS type 1 subfamily. In terms of assembly, homodimer.

The protein localises to the cytoplasm. The enzyme catalyses tRNA(Pro) + L-proline + ATP = L-prolyl-tRNA(Pro) + AMP + diphosphate. In terms of biological role, catalyzes the attachment of proline to tRNA(Pro) in a two-step reaction: proline is first activated by ATP to form Pro-AMP and then transferred to the acceptor end of tRNA(Pro). As ProRS can inadvertently accommodate and process non-cognate amino acids such as alanine and cysteine, to avoid such errors it has two additional distinct editing activities against alanine. One activity is designated as 'pretransfer' editing and involves the tRNA(Pro)-independent hydrolysis of activated Ala-AMP. The other activity is designated 'posttransfer' editing and involves deacylation of mischarged Ala-tRNA(Pro). The misacylated Cys-tRNA(Pro) is not edited by ProRS. In Limosilactobacillus fermentum (strain NBRC 3956 / LMG 18251) (Lactobacillus fermentum), this protein is Proline--tRNA ligase.